A 139-amino-acid polypeptide reads, in one-letter code: MANSSSGVAIHDDCKLKFNELQSKRMHRFITFMMDNKGKEIIVDKIGDRTTSYEDFTSSLPEGDCRFAIYDFDFLTAEDVPKSRIFYILWSPDNAKVRSKMLYASSNERFKKELNGIQLEVQATDAGEISLDALKDRVK.

Residues 5–139 (SSGVAIHDDC…SLDALKDRVK (135 aa)) enclose the ADF-H domain.

Belongs to the actin-binding proteins ADF family. Interacts with LECRK1 (via kinase domain).

The protein resides in the cytoplasm. Its subcellular location is the cytoskeleton. In terms of biological role, actin-depolymerizing protein. Severs actin filaments (F-actin) and binds to actin monomers. Involved in innate immunity. Required for the expression of defense-related genes PR1A, LOX2 and CHS1 upon biotic stresses. Required for basal resistance to the fungal blast (Magnaporthe grisea), bacterial blight (Xanthomonas oryzae pv. oryzae, Xoo) and the herbivorous insect brown planthopper (Nilaparvata lugens, BPH). Involved in the promotion of seed germination. Required for the expression of alpha-amylase genes during seed germination. This chain is Actin-depolymerizing factor 4 (ADF4), found in Oryza sativa subsp. japonica (Rice).